Here is an 876-residue protein sequence, read N- to C-terminus: Probable inactive ATP-dependent zinc metalloprotease FTSHI 2, chloroplastic (876 aa).

A disordered region spans residues 1–20 (MACRFPLHSSSPSQFLSPEN). The transit peptide at 1-32 (MACRFPLHSSSPSQFLSPENRQRLPRNYPSIS) directs the protein to the chloroplast. The segment covering 8 to 19 (HSSSPSQFLSPE) has biased composition (polar residues). Residues 59-79 (LLAIPITLTIISASLAKPSFA) traverse the membrane as a helical segment. Residues 256-276 (TMKAQKKQQERKKRKAVRKKK) form a disordered region. The span at 258–275 (KAQKKQQERKKRKAVRKK) shows a compositional bias: basic residues. Residues 304-324 (VATALGLVFFYIFYRVVVLNY) form a helical membrane-spanning segment. A disordered region spans residues 350–370 (ELEREMEGIEEEDEEVEEGTG). Residues 357 to 368 (GIEEEDEEVEEG) are compositionally biased toward acidic residues. 450–457 (GPPGVGKT) is an ATP binding site.

In the N-terminal section; belongs to the AAA ATPase family. This sequence in the C-terminal section; belongs to the peptidase M41 family. As to quaternary structure, homooligomer. Interacts with FtsHi4.

Its subcellular location is the plastid. The protein localises to the chloroplast membrane. Required for plastid development during embryogenesis. Might be involved in chaperone functions or play a structural role in the thylakoid FtsH complex. This chain is Probable inactive ATP-dependent zinc metalloprotease FTSHI 2, chloroplastic, found in Arabidopsis thaliana (Mouse-ear cress).